The chain runs to 97 residues: Serine protease inhibitor Kazal-type 13 (97 aa).

An N-terminal signal peptide occupies residues 1-26 (MTRRGCWPHRIIFSLILLTWTHVTLA). The region spanning 36–97 (NWPKPPCKMY…IEFVKYGKCE (62 aa)) is the Kazal-like domain. Disulfide bonds link C42–C78, C56–C75, and C64–C96.

Restricted to the epididymis, with highest levels in the initial segment, including epithelial cells, lumen, and sperm (at protein level). Localizes to the sperm heads, where it is restricted to the acrosomal region in epididymal spermatozoa, but not in testicular spermatozoa (at protein level).

It is found in the secreted. May be a serine protease inhibitor. Essential for sperm maturation and fertility. Inhibits sperm acrosome reaction, protecting sperm from premature reaction. In Rattus norvegicus (Rat), this protein is Serine protease inhibitor Kazal-type 13 (Spink13).